The primary structure comprises 140 residues: Hemoglobin subunit beta (140 aa).

The region spanning 1 to 140 is the Globin domain; that stretch reads GGSDVSAFLA…VGEALAKGYH (140 aa). Residues His-57 and His-86 each coordinate heme b.

This sequence belongs to the globin family. As to quaternary structure, heterotetramer of either two alpha-B chains or two alpha-C chains and two beta chains.

Its function is as follows. The beta chain is a component of adult hemoglobins B. And C. This is Hemoglobin subunit beta (HBB) from Aquarana catesbeiana (American bullfrog).